A 325-amino-acid polypeptide reads, in one-letter code: Syntaxin-16 (325 aa).

Over 1-301 (MATRRLTDAF…AEQYQKKNRK (301 aa)) the chain is Cytoplasmic. At S41 the chain carries Phosphoserine. Residues 230-292 (TLMVEERERE…EDGLKQLHKA (63 aa)) enclose the t-SNARE coiled-coil homology domain. The chain crosses the membrane as a helical; Anchor for type IV membrane protein span at residues 302–322 (MLVILILFVIIIVLIVVLVGV). Residues 323-325 (KSR) lie on the Vesicular side of the membrane.

Belongs to the syntaxin family. In terms of assembly, interacts with GCC2. Interacts with BAIAP3; this interaction is increased in the presence of calcium. Ubiquitous.

It is found in the golgi apparatus membrane. Its subcellular location is the cytoplasm. Its function is as follows. SNARE involved in vesicular transport from the late endosomes to the trans-Golgi network. This is Syntaxin-16 (STX16) from Homo sapiens (Human).